The sequence spans 140 residues: Large ribosomal subunit protein uL11 (140 aa).

This sequence belongs to the universal ribosomal protein uL11 family. Part of the ribosomal stalk of the 50S ribosomal subunit. Interacts with L10 and the large rRNA to form the base of the stalk. L10 forms an elongated spine to which L12 dimers bind in a sequential fashion forming a multimeric L10(L12)X complex. Post-translationally, one or more lysine residues are methylated.

Forms part of the ribosomal stalk which helps the ribosome interact with GTP-bound translation factors. The protein is Large ribosomal subunit protein uL11 of Dehalococcoides mccartyi (strain ATCC BAA-2266 / KCTC 15142 / 195) (Dehalococcoides ethenogenes (strain 195)).